Here is a 404-residue protein sequence, read N- to C-terminus: Phosphopentomutase (404 aa).

Mn(2+) is bound by residues Asp-10, Asp-303, His-308, Asp-344, His-345, and His-356.

It belongs to the phosphopentomutase family. Mn(2+) is required as a cofactor.

The protein localises to the cytoplasm. The catalysed reaction is 2-deoxy-alpha-D-ribose 1-phosphate = 2-deoxy-D-ribose 5-phosphate. The enzyme catalyses alpha-D-ribose 1-phosphate = D-ribose 5-phosphate. It participates in carbohydrate degradation; 2-deoxy-D-ribose 1-phosphate degradation; D-glyceraldehyde 3-phosphate and acetaldehyde from 2-deoxy-alpha-D-ribose 1-phosphate: step 1/2. Functionally, isomerase that catalyzes the conversion of deoxy-ribose 1-phosphate (dRib-1-P) and ribose 1-phosphate (Rib-1-P) to deoxy-ribose 5-phosphate (dRib-5-P) and ribose 5-phosphate (Rib-5-P), respectively. The sequence is that of Phosphopentomutase from Shewanella baltica (strain OS155 / ATCC BAA-1091).